A 237-amino-acid polypeptide reads, in one-letter code: Probable GTP-binding protein EngB (237 aa).

In terms of domain architecture, EngB-type G spans 23–209 (AVPEVAFAGR…QAVIAGWLNL (187 aa)). GTP is bound by residues 31–38 (GRSNAGKS), 58–62 (GRTQH), 82–85 (DLPG), 149–152 (TKAD), and 187–190 (LFSS). The Mg(2+) site is built by S38 and T60. Residues 214 to 237 (KAEREPAAANSVPPAVPPASDPAA) are disordered. Pro residues predominate over residues 227–237 (PAVPPASDPAA).

The protein belongs to the TRAFAC class TrmE-Era-EngA-EngB-Septin-like GTPase superfamily. EngB GTPase family. Requires Mg(2+) as cofactor.

Its function is as follows. Necessary for normal cell division and for the maintenance of normal septation. This Cupriavidus taiwanensis (strain DSM 17343 / BCRC 17206 / CCUG 44338 / CIP 107171 / LMG 19424 / R1) (Ralstonia taiwanensis (strain LMG 19424)) protein is Probable GTP-binding protein EngB.